The primary structure comprises 106 residues: Thioredoxin (106 aa).

Residues 2-106 (SHYIELTEEN…LKEQLNKLLG (105 aa)) form the Thioredoxin domain. A disulfide bridge connects residues C30 and C33.

Belongs to the thioredoxin family.

Functionally, participates in various redox reactions through the reversible oxidation of its active center dithiol to a disulfide and catalyzes dithiol-disulfide exchange reactions. The protein is Thioredoxin (trxA) of Helicobacter pylori (strain J99 / ATCC 700824) (Campylobacter pylori J99).